The primary structure comprises 466 residues: D-inositol 3-phosphate glycosyltransferase (466 aa).

Residues 1–12 show a composition bias toward low complexity; that stretch reads MRPMRAGAGAAG. The segment at 1–22 is disordered; the sequence is MRPMRAGAGAAGESCKDDGVRP. Residue histidine 43 participates in 1D-myo-inositol 3-phosphate binding. Residues 49-50 and glycine 57 each bind UDP-N-acetyl-alpha-D-glucosamine; that span reads QP. 1D-myo-inositol 3-phosphate contacts are provided by residues 54-59, lysine 112, tyrosine 145, threonine 169, and arginine 189; that span reads DAGGMN. UDP-N-acetyl-alpha-D-glucosamine contacts are provided by arginine 263, lysine 268, and glutamine 321. Mg(2+) contacts are provided by phenylalanine 330, histidine 331, and valine 333. Residues glutamate 343 and glutamate 351 each coordinate UDP-N-acetyl-alpha-D-glucosamine. Threonine 357 serves as a coordination point for Mg(2+). The segment at 446-466 is disordered; that stretch reads VRDPVAARKPRRWTARRGVGA.

It belongs to the glycosyltransferase group 1 family. MshA subfamily. Homodimer.

The catalysed reaction is 1D-myo-inositol 3-phosphate + UDP-N-acetyl-alpha-D-glucosamine = 1D-myo-inositol 2-acetamido-2-deoxy-alpha-D-glucopyranoside 3-phosphate + UDP + H(+). Functionally, catalyzes the transfer of a N-acetyl-glucosamine moiety to 1D-myo-inositol 3-phosphate to produce 1D-myo-inositol 2-acetamido-2-deoxy-glucopyranoside 3-phosphate in the mycothiol biosynthesis pathway. The protein is D-inositol 3-phosphate glycosyltransferase of Mycobacterium marinum (strain ATCC BAA-535 / M).